The primary structure comprises 527 residues: Cytochrome P450 714B3 (527 aa).

Residues 1 to 14 are Lumenal-facing; sequence MEVAMAMAVKVLLS. The chain crosses the membrane as a helical; Signal-anchor for type III membrane protein span at residues 15–35; the sequence is LCCVGACGLAVYLYHILWLVP. At 36-527 the chain is on the cytoplasmic side; that stretch reads QKVLAKFEDQ…SVCTKRGTAI (492 aa). C464 serves as a coordination point for heme.

This sequence belongs to the cytochrome P450 family. Heme is required as a cofactor.

The protein localises to the membrane. May be involved in gibberellin metabolism. This chain is Cytochrome P450 714B3 (CYP714B3), found in Zea mays (Maize).